The primary structure comprises 392 residues: Sex-determining region Y protein (392 aa).

Residues 4–81 (HVKRPMNAFM…YKYQPHRRAK (78 aa)) are sufficient for interaction with KPNB1. Positions 5 to 73 (VKRPMNAFMV…LHREKYPNYK (69 aa)) form a DNA-binding region, HMG box. 2 required for nuclear localization regions span residues 6-22 (KRPM…ERHK) and 75-81 (QPHRRAK). The sufficient for interaction with EP300 stretch occupies residues 52–84 (RPFFQEAQRLKILHREKYPNYKYQPHRRAKVSQ). Lys-81 carries the N6-acetyllysine modification. Residues 92 to 144 (AVASTKLYNLLQWDRNPHAITYRQDWSRAAHLYSKNQQSFYWQPVDIPTGHLQ) are necessary for interaction with ZNF208 isoform KRAB-O. A necessary for interaction with SLC9A3R2 and nuclear accumulation of SLC9A3R2 region spans residues 94-138 (ASTKLYNLLQWDRNPHAITYRQDWSRAAHLYSKNQQSFYWQPVDI). Residues 142-361 (HLQQQQQQQQ…QQQQQQQQQQ (220 aa)) form a disordered region. Low complexity predominate over residues 144 to 181 (QQQQQQQQQQQFHNHHQQQQQFYDHHQQQQQQQQQQQQ). 2 stretches are compositionally biased toward basic and acidic residues: residues 182-197 (FHDH…DHHQ) and 210-228 (QEQQ…HDHQ). The segment covering 229–238 (QQQQQQQQQQ) has biased composition (low complexity). Composition is skewed to basic and acidic residues over residues 239–250 (FHDHHQQKQQFH), 261–295 (FHDH…HDHP), and 313–349 (QFHD…DHHQ). The span at 350–361 (QQQQQQQQQQQQ) shows a compositional bias: low complexity.

This sequence belongs to the SRY family. As to quaternary structure, interacts with KPNB1, ZNF208 isoform KRAB-O, PARP1 and SLC9A3R2. The interaction with KPNB1 is sensitive to dissociation by Ran in the GTP-bound form. Interaction with PARP1 impaired its DNA-binding activity. Interacts with CALM, EP300, HDAC3 and WT1. The interaction with EP300 modulates its DNA-binding activity. Degraded due to the presence of a degron at the C-terminus that promotes its degradation. In terms of processing, phosphorylated on serine residues by PKA. Phosphorylation by PKA enhances its DNA-binding activity and stimulates transcription repression. Post-translationally, acetylation of Lys-81 contributes to its nuclear localization and enhances its interaction with KPNB1. Poly-ADP-ribosylated by PARP1. ADP-ribosylation reduces its DNA-binding activity. Expressed in gonadal somatic pre-Sertoli cells. Expressed in the substantia nigra of the brain (at protein level). Expressed in diencephalon, cortex, the substantia nigra of the midbrain and the medial mammillary bodies of the hypothalamus of male, but not female. As to expression, expressed in gonadal somatic pre-Sertoli cells. While it is expressed at lower level compared to isoform Sry-S, this form is more stable and constitutes the predominant protein product of the Sry locus in XY gonads (at protein level).

It is found in the nucleus speckle. The protein resides in the cytoplasm. Its subcellular location is the nucleus. Transcriptional regulator that controls a genetic switch in male development. It is necessary and sufficient for initiating male sex determination by directing the development of supporting cell precursors (pre-Sertoli cells) as Sertoli rather than granulosa cells. Involved in different aspects of gene regulation including promoter activation or repression. Binds to the DNA consensus sequence 5'-[AT]AACAA[AT]-3'. SRY HMG box recognizes DNA by partial intercalation in the minor groove and promotes DNA bending. Also involved in pre-mRNA splicing. In male adult brain involved in the maintenance of motor functions of dopaminergic neurons. Its function is as follows. Constitutes the major isoform, which is necessary and sufficient for initiating male sex determination. Functionally, constitutes a minor isoform, which is unstable due to the presence of a degron at the C-terminus that promotes its degradation. Not necessary and sufficient for initiating male sex determination. The sequence is that of Sex-determining region Y protein from Mus musculus (Mouse).